A 137-amino-acid chain; its full sequence is Small ribosomal subunit protein bS6 (137 aa).

Positions 96 to 137 (ITEASPMAKAKDERDTRRSSEERAPRAEAAEEVEESAENTAE) are disordered. Residues 104-124 (KAKDERDTRRSSEERAPRAEA) are compositionally biased toward basic and acidic residues. Over residues 125 to 137 (AEEVEESAENTAE) the composition is skewed to acidic residues.

The protein belongs to the bacterial ribosomal protein bS6 family.

In terms of biological role, binds together with bS18 to 16S ribosomal RNA. This is Small ribosomal subunit protein bS6 from Shewanella halifaxensis (strain HAW-EB4).